The chain runs to 280 residues: ATP synthase gamma chain (280 aa).

The protein belongs to the ATPase gamma chain family. F-type ATPases have 2 components, CF(1) - the catalytic core - and CF(0) - the membrane proton channel. CF(1) has five subunits: alpha(3), beta(3), gamma(1), delta(1), epsilon(1). CF(0) has three main subunits: a, b and c.

The protein resides in the cell membrane. Produces ATP from ADP in the presence of a proton gradient across the membrane. The gamma chain is believed to be important in regulating ATPase activity and the flow of protons through the CF(0) complex. This is ATP synthase gamma chain from Mycoplasma mycoides subsp. mycoides SC (strain CCUG 32753 / NCTC 10114 / PG1).